The following is a 122-amino-acid chain: Small ribosomal subunit protein uS13 (122 aa).

The segment at 93–122 is disordered; that stretch reads RRGLPVRGQNTKTNARTRKGPKRTAGGKKK. The span at 107–122 shows a compositional bias: basic residues; it reads ARTRKGPKRTAGGKKK.

Belongs to the universal ribosomal protein uS13 family. As to quaternary structure, part of the 30S ribosomal subunit. Forms a loose heterodimer with protein S19. Forms two bridges to the 50S subunit in the 70S ribosome.

Functionally, located at the top of the head of the 30S subunit, it contacts several helices of the 16S rRNA. In the 70S ribosome it contacts the 23S rRNA (bridge B1a) and protein L5 of the 50S subunit (bridge B1b), connecting the 2 subunits; these bridges are implicated in subunit movement. Contacts the tRNAs in the A and P-sites. This is Small ribosomal subunit protein uS13 from Syntrophomonas wolfei subsp. wolfei (strain DSM 2245B / Goettingen).